A 531-amino-acid chain; its full sequence is Large neutral amino acids transporter small subunit 2 (531 aa).

Positions 1 to 29 (MEKGARQRNNTAKNHPGSDTSPEAEASSG) are disordered. Over 1-43 (MEKGARQRNNTAKNHPGSDTSPEAEASSGGGGVALKKEIGLVS) the chain is Cytoplasmic. Positions 7–21 (QRNNTAKNHPGSDTS) are enriched in polar residues. 4 positions are modified to phosphoserine: serine 18, serine 21, serine 27, and serine 28. A helical transmembrane segment spans residues 44 to 64 (ACGIIVGNIIGSGIFVSPKGV). Isoleucine 52 lines the L-leucine pocket. Residues 65 to 72 (LENAGSVG) are Extracellular-facing. A helical membrane pass occupies residues 73 to 94 (LALIVWIVTGIITAVGALCYAE). Over 95 to 115 (LGVTIPKSGGDYSYVKDIFGG) the chain is Cytoplasmic. The helical transmembrane segment at 116–148 (LAGFLRLWIAVLVIYPTNQAVIALTFSNYVLQP) threads the bilayer. Asparagine 133 contacts L-tryptophan. Topologically, residues 149–156 (LFPTCFPP) are extracellular. Residues 157–177 (ESGLRLLAAICLLLLTWVNCS) traverse the membrane as a helical segment. Residues 178-180 (SVR) are Cytoplasmic-facing. Residues 181–209 (WATRVQDIFTAGKLLALALIIIMGIVQIC) traverse the membrane as a helical segment. Residues 210–229 (KGEFFWLEPKNAFENFQEPD) lie on the Extracellular side of the membrane. A helical transmembrane segment spans residues 230 to 251 (IGLVALAFLQGSFAYGGWNFLN). Glycine 245 is an L-leucine binding site. Residues 252 to 264 (YVTEELVDPYKNL) are Cytoplasmic-facing. Residues 265–286 (PRAIFISIPLVTFVYVFANIAY) form a helical membrane-spanning segment. The Extracellular portion of the chain corresponds to 287–311 (VTAMSPQELLASNAVAVTFGEKLLG). Residues 312–337 (VMAWIMPISVALSTFGGVNGSLFTSS) form a helical membrane-spanning segment. Residues 338–363 (RLFFAGAREGHLPSVLAMIHVKRCTP) are Cytoplasmic-facing. Residues 364–381 (IPALLFTCLSTLLMLVTS) traverse the membrane as a helical segment. Residues 382 to 385 (DMYT) are Extracellular-facing. The helical transmembrane segment at 386-407 (LINYVGFINYLFYGVTVAGQIV) threads the bilayer. An L-tryptophan-binding site is contributed by asparagine 394. Residues 408–422 (LRWKKPDIPRPIKVS) lie on the Cytoplasmic side of the membrane. A run of 2 helical transmembrane segments spans residues 423–445 (LLFPIIYLLFWAFLLIFSLWSEP) and 446–465 (VVCGIGLAIMLTGVPVYFLG). The Cytoplasmic segment spans residues 466–531 (VYWQHKPKCF…VKDPDSEEQP (66 aa)). The interval 499–531 (NSGAEETTDDLEEQHKPIFKPTPVKDPDSEEQP) is disordered. Phosphoserine is present on serine 527.

Belongs to the amino acid-polyamine-organocation (APC) superfamily. L-type amino acid transporter (LAT) (TC 2.A.3.8) family. In terms of assembly, disulfide-linked heterodimer composed of the catalytic light chain subunit SLC7A8 and the heavy chain subunit SLC3A2. SLC3A2 acts as a chaperone for correct plasma membrane trafficking and stabilization of SLC7A8 and modulates the substrate affinity and specificity of SLC7A8. ICAM-1 associates with the heterodimer SLC3A2/SLC7A8; facilitates leucine uptake. In terms of tissue distribution, strongly expressed in kidney and small intestine. Moderately present in placenta, ovary and brain. Expressed in the inner ear.

It is found in the cell membrane. The protein resides in the basolateral cell membrane. The catalysed reaction is L-histidine(in) + L-phenylalanine(out) = L-histidine(out) + L-phenylalanine(in). The enzyme catalyses L-tryptophan(in) + L-phenylalanine(out) = L-tryptophan(out) + L-phenylalanine(in). It carries out the reaction L-isoleucine(in) + L-phenylalanine(out) = L-isoleucine(out) + L-phenylalanine(in). It catalyses the reaction L-valine(in) + L-phenylalanine(out) = L-valine(out) + L-phenylalanine(in). The catalysed reaction is L-leucine(in) + L-phenylalanine(out) = L-leucine(out) + L-phenylalanine(in). The enzyme catalyses L-glutamine(in) + L-phenylalanine(out) = L-glutamine(out) + L-phenylalanine(in). It carries out the reaction L-cysteine(in) + L-phenylalanine(out) = L-cysteine(out) + L-phenylalanine(in). It catalyses the reaction L-phenylalanine(out) + L-methionine(in) = L-phenylalanine(in) + L-methionine(out). The catalysed reaction is L-leucine(out) + L-methionine(in) = L-leucine(in) + L-methionine(out). The enzyme catalyses L-cysteine(out) + L-methionine(in) = L-cysteine(in) + L-methionine(out). It carries out the reaction S-methylmercury-L-cysteine(out) + L-methionine(in) = S-methylmercury-L-cysteine(in) + L-methionine(out). It catalyses the reaction S-methylmercury-L-cysteine(in) + L-leucine(out) = S-methylmercury-L-cysteine(out) + L-leucine(in). The catalysed reaction is S-methylmercury-L-cysteine(in) + L-phenylalanine(out) = S-methylmercury-L-cysteine(out) + L-phenylalanine(in). The enzyme catalyses L-phenylalanine(out) + L-serine(in) = L-phenylalanine(in) + L-serine(out). It carries out the reaction L-phenylalanine(out) + glycine(in) = L-phenylalanine(in) + glycine(out). It catalyses the reaction L-phenylalanine(out) + L-alanine(in) = L-phenylalanine(in) + L-alanine(out). The catalysed reaction is L-tryptophan(in) = L-tryptophan(out). The enzyme catalyses 3,3',5-triiodo-L-thyronine(out) = 3,3',5-triiodo-L-thyronine(in). It carries out the reaction 3,3'-diiodo-L-thyronine(out) = 3,3'-diiodo-L-thyronine(in). It catalyses the reaction L-dopa(out) + L-phenylalanine(in) = L-dopa(in) + L-phenylalanine(out). Associates with SLC3A2 to form a functional heterodimeric complex that translocates small and large neutral amino acids with broad specificity and a stoichiometry of 1:1. Functions as amino acid antiporter mediating the influx of extracellular essential amino acids mainly in exchange with the efflux of highly concentrated intracellular amino acids. Has relatively symmetrical selectivities but strongly asymmetrical substrate affinities at both the intracellular and extracellular sides of the transporter. This asymmetry allows SLC7A8 to regulate intracellular amino acid pools (mM concentrations) by exchange with external amino acids (uM concentration range), equilibrating the relative concentrations of different amino acids across the plasma membrane instead of mediating their net uptake. May play an essential role in the reabsorption of neutral amino acids from the epithelial cells to the bloodstream in the kidney. Involved in the uptake of methylmercury (MeHg) when administered as the L-cysteine or D,L-homocysteine complexes, and hence plays a role in metal ion homeostasis and toxicity. Involved in the cellular activity of small molecular weight nitrosothiols, via the stereoselective transport of L-nitrosocysteine (L-CNSO) across the transmembrane. Imports the thyroid hormone diiodothyronine (T2) and to a smaller extent triiodothyronine (T3) but not rT 3 or thyroxine (T4). Mediates the uptake of L-DOPA. May participate in auditory function. The sequence is that of Large neutral amino acids transporter small subunit 2 (Slc7a8) from Mus musculus (Mouse).